Consider the following 326-residue polypeptide: D-alanine--D-alanine ligase (326 aa).

Residues 121 to 320 (ISVLRPYGIK…LKDLFGSTIE (200 aa)) enclose the ATP-grasp domain. An ATP-binding site is contributed by 149 to 204 (VDKVGLPCFVKANRAGSSFGVTKVKTEDEIISAAKTAFTEDDEAIIESFLDGTEVS). The Mg(2+) site is built by glutamate 275, glutamate 287, and asparagine 289.

It belongs to the D-alanine--D-alanine ligase family. Requires Mg(2+) as cofactor. The cofactor is Mn(2+).

It localises to the cytoplasm. The catalysed reaction is 2 D-alanine + ATP = D-alanyl-D-alanine + ADP + phosphate + H(+). It participates in cell wall biogenesis; peptidoglycan biosynthesis. Cell wall formation. The sequence is that of D-alanine--D-alanine ligase from Christiangramia forsetii (strain DSM 17595 / CGMCC 1.15422 / KT0803) (Gramella forsetii).